Consider the following 195-residue polypeptide: Coiled-coil domain-containing protein 184 (195 aa).

The stretch at 39–68 (GMKELMEHLKAQLQALFEDVRAMRGALDEQ) forms a coiled coil. Residues 98–175 (RQGGLGVVGN…AGLLGGDGPL (78 aa)) are disordered. Residues 135–146 (PEDEEDDDEEEK) are compositionally biased toward acidic residues.

This chain is Coiled-coil domain-containing protein 184 (CCDC184), found in Bos taurus (Bovine).